A 372-amino-acid polypeptide reads, in one-letter code: Maltose/maltodextrin import ATP-binding protein MalK (372 aa).

The ABC transporter domain occupies 4-234 (VSLRNVGKSY…PANRFVAGFI (231 aa)). ATP is bound at residue 36–43 (GPSGCGKS).

This sequence belongs to the ABC transporter superfamily. Maltooligosaccharide importer (TC 3.A.1.1.1) family. As to quaternary structure, the complex is composed of two ATP-binding proteins (MalK), two transmembrane proteins (MalG and MalK) and a solute-binding protein (MalE).

Its subcellular location is the cell inner membrane. The enzyme catalyses D-maltose(out) + ATP + H2O = D-maltose(in) + ADP + phosphate + H(+). Its function is as follows. Part of the ABC transporter complex MalEFGK involved in maltose/maltodextrin import. Responsible for energy coupling to the transport system. In Mannheimia succiniciproducens (strain KCTC 0769BP / MBEL55E), this protein is Maltose/maltodextrin import ATP-binding protein MalK.